A 205-amino-acid polypeptide reads, in one-letter code: RNA pyrophosphohydrolase (205 aa).

Positions 6–149 (GFRPNVGIVL…KRGVYARALR (144 aa)) constitute a Nudix hydrolase domain. Residues 38 to 59 (GGMNTDETPVEAMYRELREETG) carry the Nudix box motif. Residues 178–205 (GSSAAGHDRPRKRPRKRGGVLPVRINND) are disordered. Positions 186 to 195 (RPRKRPRKRG) are enriched in basic residues.

This sequence belongs to the Nudix hydrolase family. RppH subfamily. The cofactor is a divalent metal cation.

In terms of biological role, accelerates the degradation of transcripts by removing pyrophosphate from the 5'-end of triphosphorylated RNA, leading to a more labile monophosphorylated state that can stimulate subsequent ribonuclease cleavage. The protein is RNA pyrophosphohydrolase of Xanthomonas campestris pv. campestris (strain 8004).